Here is a 93-residue protein sequence, read N- to C-terminus: Small ribosomal subunit protein uS19 (93 aa).

Residues 73 to 93 (EFSPTRTFRGHVKDDRKSKRR) form a disordered region. Basic and acidic residues predominate over residues 83-93 (HVKDDRKSKRR).

It belongs to the universal ribosomal protein uS19 family.

Its function is as follows. Protein S19 forms a complex with S13 that binds strongly to the 16S ribosomal RNA. This is Small ribosomal subunit protein uS19 from Streptomyces avermitilis (strain ATCC 31267 / DSM 46492 / JCM 5070 / NBRC 14893 / NCIMB 12804 / NRRL 8165 / MA-4680).